The following is a 263-amino-acid chain: Outer membrane protein OmpK (263 aa).

Residues Met-1–Ala-20 form the signal peptide.

The protein belongs to the nucleoside-specific channel-forming outer membrane porin (Tsx) (TC 1.B.10) family.

Its subcellular location is the cell outer membrane. Functionally, serves as receptor for a broad-host-range vibriophage, KVP40. The polypeptide is Outer membrane protein OmpK (Vibrio parahaemolyticus).